We begin with the raw amino-acid sequence, 471 residues long: Thymidine phosphorylase (471 aa).

The span at 1–10 (MAAPGTPPPS) shows a compositional bias: pro residues. The interval 1-21 (MAAPGTPPPSASGGGGGEPRQ) is disordered. T6 carries the phosphothreonine modification. Residues H102, R188, S203, and K207 each contribute to the substrate site.

Belongs to the thymidine/pyrimidine-nucleoside phosphorylase family. Homodimer.

It carries out the reaction thymidine + phosphate = 2-deoxy-alpha-D-ribose 1-phosphate + thymine. Its pathway is pyrimidine metabolism; dTMP biosynthesis via salvage pathway; dTMP from thymine: step 1/2. Catalyzes the reversible phosphorolysis of thymidine. The produced molecules are then utilized as carbon and energy sources or in the rescue of pyrimidine bases for nucleotide synthesis. This chain is Thymidine phosphorylase (Tymp), found in Mus musculus (Mouse).